A 293-amino-acid chain; its full sequence is MILLETVIVTGMSGAGKSLAIRAFEDMGFFCIDNLPPQFLPKIAELASASNDKISRIAAVIDIRGGELFDDFKDVLNDLKKGTYNFKVLFLDAHDNVLVQRYKETRRKHPLSFESDGSILEAIQKEREKLEDIKRYADFIIDTSTLSPRDLKEKLFEIFSAQRSRETMLITVMSFGFKYGLPLDADLVFDVRFIPNPFYVEELKHKTGKEKEVKEYVLKWDVTKEFLKKLFDLILFLIPNYAEEGKAQLVIAIGCTGGKHRSVTIAEELFELIKNNGYKASIFHRDIEKDIKG.

ATP is bound at residue 11-18; sequence GMSGAGKS. 62 to 65 is a binding site for GTP; that stretch reads DIRG.

Belongs to the RapZ-like family.

Functionally, displays ATPase and GTPase activities. The sequence is that of Nucleotide-binding protein Csac_1160 from Caldicellulosiruptor saccharolyticus (strain ATCC 43494 / DSM 8903 / Tp8T 6331).